Consider the following 696-residue polypeptide: Serine/threonine-protein kinase sck1 (696 aa).

Disordered stretches follow at residues 1–59 (MTEI…YDPV) and 77–118 (HKEQ…TPPS). Positions 11 to 37 (SSNSENTNQASPSTIQSHSTQPVLSND) are enriched in polar residues. Basic and acidic residues-rich tracts occupy residues 38–49 (HSTKVNDYEGKE) and 77–88 (HKEQSLKEDKES). In terms of domain architecture, C2 spans 122 to 272 (IRHDTVVPKD…VQEAWYKLEP (151 aa)). The Protein kinase domain maps to 302–563 (FTALRLIGKG…TTELKEHPFF (262 aa)). ATP-binding positions include 308–316 (IGKGTFGQV) and Lys-331. Asp-428 (proton acceptor) is an active-site residue. Residues 564–643 (ADINWDLLSK…VNKSIDEQFQ (80 aa)) form the AGC-kinase C-terminal domain. The residue at position 632 (Thr-632) is a Phosphothreonine. The residue at position 665 (Ser-665) is a Phosphoserine.

This sequence belongs to the protein kinase superfamily. AGC Ser/Thr protein kinase family. cAMP subfamily.

It catalyses the reaction L-seryl-[protein] + ATP = O-phospho-L-seryl-[protein] + ADP + H(+). The catalysed reaction is L-threonyl-[protein] + ATP = O-phospho-L-threonyl-[protein] + ADP + H(+). Functionally, protein kinase that is part of growth control pathway which is at least partially redundant with the cAMP pathway. Required for trehalase activation. This is Serine/threonine-protein kinase sck1 (sck1) from Schizosaccharomyces pombe (strain 972 / ATCC 24843) (Fission yeast).